A 69-amino-acid chain; its full sequence is Probable cold shock protein y4cH (69 aa).

One can recognise a CSD domain in the interval 5 to 65 (GTVKWFNATK…DRKSGKMSAD (61 aa)).

The protein localises to the cytoplasm. This is Probable cold shock protein y4cH from Sinorhizobium fredii (strain NBRC 101917 / NGR234).